Here is a 243-residue protein sequence, read N- to C-terminus: Ras-related protein Rab-12 (243 aa).

Methionine 1 is modified (N-acetylmethionine). Residues 1–36 (MDPSAALHRRPAGGGLGAVSPALSGGQARRRKQPPR) are disordered. Residues serine 20 and serine 24 each carry the phosphoserine modification. Positions 51, 52, 53, 54, 55, 72, and 73 each coordinate GTP. Threonine 55 is a Mg(2+) binding site. Short sequence motifs (switch) lie at residues 64–78 (DTFC…GVDF) and 96–113 (DTAG…YYRS). Positions 73 and 96 each coordinate Mg(2+). Position 99 (glycine 99) interacts with GTP. Serine 105 carries the phosphoserine modification. Positions 154, 155, 157, 185, 186, and 187 each coordinate GTP. Residues cysteine 242 and cysteine 243 are each lipidated (S-geranylgeranyl cysteine).

It belongs to the small GTPase superfamily. Rab family. As to quaternary structure, interacts with RABIF and OPTN. Interacts with LRRK2; interaction facilitates phosphorylation of Ser-105. Interacts with GDI1, GDI2 and CHM; these interactions are disrupted by phosphorylation on Ser-105. Interacts with RILPL1 and RILPL2; these interactions are dependent on phosphorylation of Ser-105. It depends on Mg(2+) as a cofactor. Phosphorylation of Ser-105 in the switch II region by LRRK2 prevents the association of RAB regulatory proteins, including CHM and RAB GDP dissociation inhibitors GDI1 and GDI2. As to expression, highest levels in skeletal and cardiac muscle. Also found in comparable amounts in brain, spinal cord and lung. Also detected in testis where it is expressed by Sertoli cells of the seminiferous tubules (at protein level).

Its subcellular location is the recycling endosome membrane. The protein resides in the lysosome membrane. The protein localises to the golgi apparatus membrane. It localises to the cytoplasmic vesicle. It is found in the autophagosome. It carries out the reaction GTP + H2O = GDP + phosphate + H(+). With respect to regulation, regulated by guanine nucleotide exchange factors (GEFs) including DENND3 which promote the exchange of bound GDP for free GTP. Regulated by GTPase activating proteins (GAPs) which increase the GTP hydrolysis activity. Inhibited by GDP dissociation inhibitors (GDIs). Its function is as follows. The small GTPases Rab are key regulators of intracellular membrane trafficking, from the formation of transport vesicles to their fusion with membranes. Rabs cycle between an inactive GDP-bound form and an active GTP-bound form that is able to recruit to membranes different sets of downstream effectors directly responsible for vesicle formation, movement, tethering and fusion. RAB12 may play a role in protein transport from recycling endosomes to lysosomes regulating, for instance, the degradation of the transferrin receptor. Involved in autophagy. The protein is Ras-related protein Rab-12 of Rattus norvegicus (Rat).